The sequence spans 251 residues: Astacin (251 aa).

An N-terminal signal peptide occupies residues 1–15 (MQCAVLLVLLGVVAA). A propeptide spans 16-49 (SPIIPEAARALYYNDGMFEGDIKLRAGRQPARVG) (activation peptide). Residues 50 to 248 (AAILGDEYLW…INNLYTNECS (199 aa)) form the Peptidase M12A domain. Disulfide bonds link cysteine 91/cysteine 247 and cysteine 113/cysteine 133. Residue histidine 141 coordinates Zn(2+). Glutamate 142 is a catalytic residue. The Zn(2+) site is built by histidine 145 and histidine 151. Residues 250–251 (RH) constitute a propeptide that is removed on maturation.

Monomer. The cofactor is Zn(2+).

The catalysed reaction is Hydrolysis of peptide bonds in substrates containing five or more amino acids, preferentially with Ala in P1', and Pro in P2'.. Its function is as follows. Metalloprotease. This protease prefers to cleave in front of small aliphatic residues (P1'). The presence of Lys or Arg in the P1 and P2 position yields high-turnover substrates. In the P3 position the enzyme prefers Pro &gt; Val &gt; Leu &gt; Ala &gt; Gly. The protein is Astacin of Astacus astacus (Noble crayfish).